The sequence spans 353 residues: Phospho-N-acetylmuramoyl-pentapeptide-transferase (353 aa).

Helical transmembrane passes span 24-44 (LGFFIAFFLTLFLMPKFILWA), 66-86 (TPTMGGIVFVFATIVASVLCA), 88-108 (LGNLYVLLGLIVLVGFSFVGF), 129-149 (FGMLFILSLIVSVLLSLKGLD), 160-180 (PLFEMPTMLAVGFWVLVFLST), 192-212 (GLASVPSIFTLLSLSIFVYVA), 229-249 (VGELFVVSLALVGSLFGFLWY), 256-276 (VFMGDSGSLALGGFIAYNAIV), 281-301 (ILLVLMGSIFVIETLSVILQV), and 330-350 (KVIVRFWIISMLSNLVALLSL).

This sequence belongs to the glycosyltransferase 4 family. MraY subfamily. Requires Mg(2+) as cofactor.

The protein resides in the cell inner membrane. It catalyses the reaction UDP-N-acetyl-alpha-D-muramoyl-L-alanyl-gamma-D-glutamyl-meso-2,6-diaminopimeloyl-D-alanyl-D-alanine + di-trans,octa-cis-undecaprenyl phosphate = di-trans,octa-cis-undecaprenyl diphospho-N-acetyl-alpha-D-muramoyl-L-alanyl-D-glutamyl-meso-2,6-diaminopimeloyl-D-alanyl-D-alanine + UMP. It participates in cell wall biogenesis; peptidoglycan biosynthesis. Catalyzes the initial step of the lipid cycle reactions in the biosynthesis of the cell wall peptidoglycan: transfers peptidoglycan precursor phospho-MurNAc-pentapeptide from UDP-MurNAc-pentapeptide onto the lipid carrier undecaprenyl phosphate, yielding undecaprenyl-pyrophosphoryl-MurNAc-pentapeptide, known as lipid I. In Helicobacter pylori (strain ATCC 700392 / 26695) (Campylobacter pylori), this protein is Phospho-N-acetylmuramoyl-pentapeptide-transferase.